Consider the following 288-residue polypeptide: Polyamine aminopropyltransferase (288 aa).

The region spanning 9–238 (ETLHDQFGQY…GIMTFAWATD (230 aa)) is the PABS domain. Q33 is a binding site for S-methyl-5'-thioadenosine. Spermidine is bound by residues H64 and D88. S-methyl-5'-thioadenosine-binding positions include E108 and 140 to 141 (DG). D158 acts as the Proton acceptor in catalysis. 158-161 (DCTD) provides a ligand contact to spermidine. P165 contributes to the S-methyl-5'-thioadenosine binding site.

The protein belongs to the spermidine/spermine synthase family. Homodimer or homotetramer.

The protein localises to the cytoplasm. The enzyme catalyses S-adenosyl 3-(methylsulfanyl)propylamine + putrescine = S-methyl-5'-thioadenosine + spermidine + H(+). The protein operates within amine and polyamine biosynthesis; spermidine biosynthesis; spermidine from putrescine: step 1/1. In terms of biological role, catalyzes the irreversible transfer of a propylamine group from the amino donor S-adenosylmethioninamine (decarboxy-AdoMet) to putrescine (1,4-diaminobutane) to yield spermidine. This Escherichia coli (strain UTI89 / UPEC) protein is Polyamine aminopropyltransferase.